An 887-amino-acid chain; its full sequence is Lateral signaling target protein 2 homolog (887 aa).

Lys-87 participates in a covalent cross-link: Glycyl lysine isopeptide (Lys-Gly) (interchain with G-Cter in ubiquitin). Positions 308–327 (PALSAPLPPEGPLSAKAKDP) are disordered. Position 334 is a phosphoserine (Ser-334). Disordered regions lie at residues 354 to 396 (DEMS…GSDE) and 412 to 474 (ALAR…ASLA). Position 516 is a phosphothreonine (Thr-516). Ser-586 bears the Phosphoserine; by MAP2K mark. A disordered region spans residues 599-714 (LAKASDRAPE…THAAPQATRE (116 aa)). Over residues 602–612 (ASDRAPERQEE) the composition is skewed to basic and acidic residues. Positions 638–648 (TSGSQVDTASG) are enriched in polar residues. 2 stretches are compositionally biased toward low complexity: residues 681-693 (SGSS…SCSS) and 700-711 (AAPAATHAAPQA). Residues 817–879 (DEACGFCTAC…THCYMFHVTP (63 aa)) form an FYVE-type zinc finger. Zn(2+)-binding residues include Cys-823, Cys-826, Cys-839, Cys-842, Cys-847, Cys-850, and Cys-869. The residue at position 870 (Thr-870) is a Phosphothreonine; by MAP2K. Cys-872 serves as a coordination point for Zn(2+).

It belongs to the lst-2 family. Interacts with TRIM3. Post-translationally, monoubiquitination at Lys-87 prevents binding to phosphatidylinositol 3-phosphate (PI3P) and localization to early endosome membranes.

The protein localises to the cytoplasm. The protein resides in the cytosol. It is found in the early endosome membrane. Negative regulator of epidermal growth factor receptor (EGFR) signaling. Acts by promoting EGFR degradation in endosomes when not monoubiquitinated. This Homo sapiens (Human) protein is Lateral signaling target protein 2 homolog (ZFYVE28).